The primary structure comprises 303 residues: Quinolinate synthase (303 aa).

Iminosuccinate-binding residues include His24 and Ser41. Cys86 serves as a coordination point for [4Fe-4S] cluster. Iminosuccinate contacts are provided by residues 112–114 and Ser129; that span reads YVN. [4Fe-4S] cluster is bound at residue Cys172. Iminosuccinate is bound by residues 198–200 and Thr215; that span reads HPE. Cys260 contacts [4Fe-4S] cluster.

Belongs to the quinolinate synthase family. Type 2 subfamily. [4Fe-4S] cluster serves as cofactor.

Its subcellular location is the cytoplasm. The catalysed reaction is iminosuccinate + dihydroxyacetone phosphate = quinolinate + phosphate + 2 H2O + H(+). The protein operates within cofactor biosynthesis; NAD(+) biosynthesis; quinolinate from iminoaspartate: step 1/1. Its function is as follows. Catalyzes the condensation of iminoaspartate with dihydroxyacetone phosphate to form quinolinate. This chain is Quinolinate synthase, found in Alkaliphilus metalliredigens (strain QYMF).